Here is a 215-residue protein sequence, read N- to C-terminus: MTARGTPSRFLASVLHNGLGRYVQQLQRLSFSVSRDGASSRGAREFVEREVIDFARRNPGVVIYVNSRPCCVPRVVAEYLNGAVREESIHCKSVEEISTLVQKLADQSGLDVIRIRKPFHTDNPSIQGQWHPFTNKPTTFRGLRPREVQDPAPAQDTGLRLSAVAPQILLPGWPDPPDLPTVDPISSSLTSAPAPMLSAVSCLPIVPALTTVCSA.

This sequence belongs to the mitochondrion-specific ribosomal protein mL43 family. Component of the mitochondrial large ribosomal subunit (mt-LSU). Mature mammalian 55S mitochondrial ribosomes consist of a small (28S) and a large (39S) subunit. The 28S small subunit contains a 12S ribosomal RNA (12S mt-rRNA) and 30 different proteins. The 39S large subunit contains a 16S rRNA (16S mt-rRNA), a copy of mitochondrial valine transfer RNA (mt-tRNA(Val)), which plays an integral structural role, and 52 different proteins. High relative levels in skeletal muscle and testis. Lower levels of expression in the heart, brain, placenta, lung, liver, kidney, pancreas, spleen, thymus, prostate, ovary, small intestine, colon and leukocytes. Expression is coregulated with TWNK.

It is found in the mitochondrion. In Homo sapiens (Human), this protein is Large ribosomal subunit protein mL43 (MRPL43).